The primary structure comprises 511 residues: Maturase K (511 aa).

It belongs to the intron maturase 2 family. MatK subfamily.

It is found in the plastid. The protein resides in the chloroplast. Its function is as follows. Usually encoded in the trnK tRNA gene intron. Probably assists in splicing its own and other chloroplast group II introns. This chain is Maturase K, found in Hordeum murinum subsp. leporinum (Mouse barley).